Reading from the N-terminus, the 387-residue chain is Mitochondrial import inner membrane translocase subunit TIM50 (387 aa).

Residues 1-26 (MSAVSVYPMCVRASRGLLRLRQGARC) constitute a mitochondrion transit peptide. Residues 27 to 100 (STAPPLLDVV…QKENTAYAKK (74 aa)) are Mitochondrial matrix-facing. Residues 61-93 (LQQQQKSQEQPPPEGEDSGHKQDEQGEDKKQKE) are disordered. Over residues 77-93 (DSGHKQDEQGEDKKQKE) the composition is skewed to basic and acidic residues. Residues 101–121 (MVLRLAGIMGLGGTVGIVYIF) form a helical membrane-spanning segment. Residues 122-387 (GSNSVDEQGN…AGRFWSRKQQ (266 aa)) lie on the Mitochondrial intermembrane side of the membrane. One can recognise an FCP1 homology domain in the interval 178–321 (YYQPPYTLVL…YDLAAFLKTI (144 aa)).

Belongs to the TIM50 family. As to quaternary structure, component of the TIM23 complex at least composed of timm23, timm17 and timm50.

The protein localises to the mitochondrion inner membrane. In terms of biological role, essential component of the TIM23 complex, a complex that mediates the translocation of transit peptide-containing proteins across the mitochondrial inner membrane. This Danio rerio (Zebrafish) protein is Mitochondrial import inner membrane translocase subunit TIM50 (timm50).